The primary structure comprises 156 residues: Large ribosomal subunit protein uL15 (156 aa).

A disordered region spans residues 1–56; sequence MDLSNLKPAEGATQAGQRLGRGEGSGRGGHSSTRGTKGQSSRSGSGTRPIWFEGGQ.

It belongs to the universal ribosomal protein uL15 family. As to quaternary structure, part of the 50S ribosomal subunit.

Binds to the 23S rRNA. This chain is Large ribosomal subunit protein uL15, found in Salinibacter ruber (strain DSM 13855 / M31).